Reading from the N-terminus, the 275-residue chain is Phospholipid scramblase (275 aa).

A helical membrane pass occupies residues 256–272; the sequence is WKMMLLAFALFLDYMYY.

The protein belongs to the phospholipid scramblase family. In terms of assembly, forms homooligomers in the presence of calcium. Ca(2+) serves as cofactor. Mg(2+) is required as a cofactor.

The protein localises to the membrane. The protein resides in the cell membrane. The enzyme catalyses a 1,2-diacyl-sn-glycero-3-phosphoethanolamine(in) = a 1,2-diacyl-sn-glycero-3-phosphoethanolamine(out). Its function is as follows. Catalyzes calcium-induced ATP-independent rapid bidirectional and non-specific movement of phospholipids (lipid scrambling or lipid flip-flop) between the inner and outer leaflet of the plasma membrane resulting in collapse of the phospholipid asymmetry. Preferentially, mediates calcium-dependent phosphatidylethanolamine externalization. During the liver stage, plays a role in the interaction with, and thus invasion of, host hepatocytes. Dispensable for host erythrocyte invasion and asexual parasite development. The polypeptide is Phospholipid scramblase (Plasmodium falciparum (isolate 3D7)).